The primary structure comprises 1222 residues: Probable disease resistance protein At5g45510 (1222 aa).

An ATP-binding site is contributed by 49-56 (GEAGIGKT). The stretch at 122-183 (GERDEDEEEE…KLEAEKKLVD (62 aa)) forms a coiled coil. 4 stretches are compositionally biased toward basic and acidic residues: residues 171–205 (AAEK…KEKT), 212–224 (GEDK…ERKP), 263–279 (RRQE…HAEG), and 286–322 (SGEK…HEKV). 2 disordered regions span residues 171–225 (AAEK…RKPY) and 263–327 (RRQE…PPTI). Position 293 is a phosphothreonine (Thr-293). 11 LRR repeats span residues 654–676 (LLRV…KALT), 677–699 (KLNT…FFES), 702–724 (ELRS…SGLK), 725–747 (ELHC…QELV), 785–806 (KLQH…QDSA), 813–835 (SLTR…KPLS), 836–856 (GLQI…EVCF), 861–883 (ELKT…EDLS), 884–906 (SLNE…EKLE), 907–929 (NLEV…FEKM), and 931–951 (YLRV…PADT).

Belongs to the disease resistance NB-LRR family.

Probable disease resistance protein. This is Probable disease resistance protein At5g45510 from Arabidopsis thaliana (Mouse-ear cress).